A 1032-amino-acid chain; its full sequence is uncharacterized protein (1032 aa).

The Cytoplasmic portion of the chain corresponds to Met1 to Pro17. A helical transmembrane segment spans residues Val18 to Ser36. The Periplasmic portion of the chain corresponds to Lys37–Glu337. The chain crosses the membrane as a helical span at residues Val338–Ile357. The Cytoplasmic segment spans residues Gly358–Ile363. Residues Leu364–Ser383 form a helical membrane-spanning segment. Residues Phe384–Asn389 lie on the Periplasmic side of the membrane. A helical transmembrane segment spans residues Leu390 to Leu411. Residues Glu412–Pro438 lie on the Cytoplasmic side of the membrane. Residues Val439–Gly457 traverse the membrane as a helical segment. Topologically, residues Gly458–Thr470 are periplasmic. A helical membrane pass occupies residues Leu471 to Leu493. At Leu494–Arg529 the chain is on the cytoplasmic side. A helical transmembrane segment spans residues Lys530–Asn548. Residues Ser549–Ala852 are Periplasmic-facing. A helical membrane pass occupies residues Leu853 to Phe872. At Glu873–Pro878 the chain is on the cytoplasmic side. A helical membrane pass occupies residues Met879–Ile898. At Leu899–Asn910 the chain is on the periplasmic side. A helical transmembrane segment spans residues Ile911–Cys932. Over Glu933–Pro960 the chain is Cytoplasmic. Residues Ile961–Thr979 traverse the membrane as a helical segment. Residues Gly980–Val992 are Periplasmic-facing. The chain crosses the membrane as a helical span at residues Ile993–Val1015. Topologically, residues Ala1016–His1032 are cytoplasmic.

The protein belongs to the resistance-nodulation-cell division (RND) (TC 2.A.6) family.

Its subcellular location is the cell inner membrane. In terms of biological role, could be a drug efflux pump. This is an uncharacterized protein from Haemophilus influenzae (strain ATCC 51907 / DSM 11121 / KW20 / Rd).